The primary structure comprises 671 residues: Beta-galactosidase 1 (671 aa).

Positions 1-18 (MKLIVLIFFLLFINLNYC) are cleaved as a signal peptide. The active-site Proton donor is Glu200. Residue Asn228 is glycosylated (N-linked (GlcNAc...) asparagine). Residue Glu288 is the Nucleophile of the active site. N-linked (GlcNAc...) asparagine glycosylation is found at Asn321, Asn391, Asn400, Asn499, Asn509, Asn564, and Asn595.

The protein belongs to the glycosyl hydrolase 35 family.

It localises to the lysosome. The catalysed reaction is Hydrolysis of terminal non-reducing beta-D-galactose residues in beta-D-galactosides.. Functionally, cleaves beta-linked terminal galactosyl residues from gangliosides, glycoproteins, and glycosaminoglycans. This is Beta-galactosidase 1 (glb1) from Dictyostelium discoideum (Social amoeba).